A 348-amino-acid chain; its full sequence is 3'-dehydrocarminate deglycosidase alpha subunit (348 aa).

Glu-145 provides a ligand contact to Mg(2+). The active-site Proton acceptor is His-147. 3 residues coordinate Mg(2+): Asp-177, His-275, and Glu-311.

Belongs to the C-glycoside deglycosidase alpha subunit family. As to quaternary structure, heterodimer composed of an alpha subunit (CarB) and a beta subunit (CarC). It depends on Mg(2+) as a cofactor.

The enzyme catalyses 3'-dehydrocarminate + H(+) = kermesate + 1,5-anhydro-D-erythro-hex-1-en-3-ulose. Its activity is regulated as follows. Activity is strongly reduced in the presence of chelating agents. Carbon-carbon bond-cleaving enzyme which participates in a carminate degradation pathway. Cleaves the C-C bond in 3'-dehydrocarminate to form kermesate. Also shows weak activity with other C-glycosides, such as 3''-dehydropuerarin (3''-oxo-puerarin), 3''-dehydroisoorientin (3''-oxo-homoorientin) and 3'-dehydromangiferin (3'-oxo-mangiferin). This is 3'-dehydrocarminate deglycosidase alpha subunit from Microbacterium sp.